We begin with the raw amino-acid sequence, 218 residues long: Ribose-5-phosphate isomerase A (218 aa).

Substrate contacts are provided by residues 28–31 (TGST), 81–84 (DGAD), and 94–97 (KGGG). Glu-103 acts as the Proton acceptor in catalysis. Lys-121 provides a ligand contact to substrate.

The protein belongs to the ribose 5-phosphate isomerase family. In terms of assembly, homodimer.

The enzyme catalyses aldehydo-D-ribose 5-phosphate = D-ribulose 5-phosphate. It participates in carbohydrate degradation; pentose phosphate pathway; D-ribose 5-phosphate from D-ribulose 5-phosphate (non-oxidative stage): step 1/1. Functionally, catalyzes the reversible conversion of ribose-5-phosphate to ribulose 5-phosphate. The chain is Ribose-5-phosphate isomerase A from Yersinia pseudotuberculosis serotype IB (strain PB1/+).